An 887-amino-acid chain; its full sequence is Alpha-amylase 3, chloroplastic (887 aa).

Residues 1–55 (MSTVPIESLLHHSYLRHNSKVNRGNRSFIPISLNLRSHFTSNKLLHSIGKSVGVS) constitute a chloroplast transit peptide. C499 and C587 are joined by a disulfide. Substrate contacts are provided by residues 545–546 (YM) and 664–669 (RLDFVR). The active-site Nucleophile is the D666. The Proton donor role is filled by E691. Residues W693, S695, Q712, K754, 760 to 762 (GWW), H773, Q779, K857, and W884 contribute to the substrate site.

This sequence belongs to the glycosyl hydrolase 13 family. Requires Ca(2+) as cofactor. Expressed in developing siliques.

The protein localises to the plastid. It is found in the chloroplast. It carries out the reaction Endohydrolysis of (1-&gt;4)-alpha-D-glucosidic linkages in polysaccharides containing three or more (1-&gt;4)-alpha-linked D-glucose units.. Its activity is regulated as follows. Redox-regulated, with the highest activity under reducing conditions. The midpoint redox potential is -329 mV. The disulfide bridge between Cys-499 and Cys-587 inhibits catalysis. Inhibited by CuCl(2) and H(2)O(2). In terms of biological role, possesses endoamylolytic activity in vitro, but seems not required for breakdown of transitory starch in leaves. May be involved in the determination of the final structure of glucans by shortening long linear phospho-oligosaccharides in the chloroplast stroma. Can act on both soluble and insoluble glucan substrates to release small linear and branched malto-oligosaccharides. Works synergistically with beta-amylase toward efficient starch degradation. Has activity against p-nitrophenyl maltoheptaoside (BPNP-G7), amylopectin and beta-limit dextrin. Involved in stress-induced starch degradation. In Arabidopsis thaliana (Mouse-ear cress), this protein is Alpha-amylase 3, chloroplastic.